Reading from the N-terminus, the 332-residue chain is Terpene synthase 1 (332 aa).

The short motif at 81 to 86 (DDGLDA) is the DDxx(x)D/E motif element. The short motif at 221–229 (NDLVSYEKE) is the NDxxSxxxD/E motif element.

This sequence belongs to the terpene synthase family.

The enzyme catalyses (2E,6E)-farnesyl diphosphate = (2S,3R,6S,9S)-(-)-protoillud-7-ene + diphosphate. In terms of biological role, terpene synthase that converts its substrate farnesyl diphosphate (FPP) into the sesquiterpene protoillud-7-ene. In Acytostelium subglobosum (Slime mold), this protein is Terpene synthase 1.